Reading from the N-terminus, the 693-residue chain is Elongation factor G (693 aa).

Positions 8 to 282 (KNTRNIGIMA…AVIDYLPSPL (275 aa)) constitute a tr-type G domain. GTP contacts are provided by residues 17–24 (AHIDAGKT), 81–85 (DTPGH), and 135–138 (NKMD).

It belongs to the TRAFAC class translation factor GTPase superfamily. Classic translation factor GTPase family. EF-G/EF-2 subfamily.

It is found in the cytoplasm. In terms of biological role, catalyzes the GTP-dependent ribosomal translocation step during translation elongation. During this step, the ribosome changes from the pre-translocational (PRE) to the post-translocational (POST) state as the newly formed A-site-bound peptidyl-tRNA and P-site-bound deacylated tRNA move to the P and E sites, respectively. Catalyzes the coordinated movement of the two tRNA molecules, the mRNA and conformational changes in the ribosome. The polypeptide is Elongation factor G (Staphylococcus epidermidis (strain ATCC 35984 / DSM 28319 / BCRC 17069 / CCUG 31568 / BM 3577 / RP62A)).